The following is a 222-amino-acid chain: Small ribosomal subunit protein uS7m (222 aa).

A mitochondrion-targeting transit peptide spans 1-14 (MTTKLARFAQKRWI).

Belongs to the universal ribosomal protein uS7 family. In terms of assembly, component of the mitochondrial ribosome small subunit (28S) which comprises a 12S rRNA and about 30 distinct proteins.

Its subcellular location is the mitochondrion. In Caenorhabditis elegans, this protein is Small ribosomal subunit protein uS7m (mrps-7).